A 154-amino-acid polypeptide reads, in one-letter code: Protein X (154 aa).

The tract at residues 68 to 117 (PCALRFTSARCMETTVNAHQILPKVLHKRTLGLPAMSTTDLEAYFKDCVF) is mitochondrial targeting sequence.

Belongs to the orthohepadnavirus protein X family. In terms of assembly, may form homodimer. May interact with host CEBPA, CFLAR, CREB1, DDB1, E4F1, HBXIP, HSPD1/HSP60, NFKBIA, POLR2E and SMAD4. Interacts with host SMC5-SMC6 complex and induces its degradation. Interacts with host TRPC4AP; leading to prevent ubiquitination of TRPC4AP. Interacts with host PLSCR1; this interaction promotes ubiquitination and degradation of HBx and impairs HBx-mediated cell proliferation. A fraction may be phosphorylated in insect cells and HepG2 cells, a human hepatoblastoma cell line. Phosphorylated in vitro by host protein kinase C or mitogen-activated protein kinase. N-acetylated in insect cells.

The protein resides in the host cytoplasm. It is found in the host nucleus. The protein localises to the host mitochondrion. Multifunctional protein that plays a role in silencing host antiviral defenses and promoting viral transcription. Does not seem to be essential for HBV infection. May be directly involved in development of cirrhosis and liver cancer (hepatocellular carcinoma). Most of cytosolic activities involve modulation of cytosolic calcium. The effect on apoptosis is controversial depending on the cell types in which the studies have been conducted. May induce apoptosis by localizing in mitochondria and causing loss of mitochondrial membrane potential. May also modulate apoptosis by binding host CFLAR, a key regulator of the death-inducing signaling complex (DISC). Promotes viral transcription by using the host E3 ubiquitin ligase DDB1 to target the SMC5-SMC6 complex to proteasomal degradation. This host complex would otherwise bind to viral episomal DNA, and prevents its transcription. Moderately stimulates transcription of many different viral and cellular transcription elements. Promoters and enhancers stimulated by HBx contain DNA binding sites for NF-kappa-B, AP-1, AP-2, c-EBP, ATF/CREB, or the calcium-activated factor NF-AT. This Hepatitis B virus genotype A2 subtype adw2 (strain Rutter 1979) (HBV-A) protein is Protein X.